Consider the following 592-residue polypeptide: Probable auxin efflux carrier component 1c (592 aa).

The Extracellular segment spans residues 1–6; it reads MITGAD. Residues 7-27 form a helical membrane-spanning segment; sequence FYHVMTAMVPLYVAMILAYGS. Residues 28–38 lie on the Cytoplasmic side of the membrane; sequence VKWWRIFTPDQ. A helical transmembrane segment spans residues 39 to 59; that stretch reads CSGINRFVALFAVPLLSFHFI. V51 provides a ligand contact to (indol-3-yl)acetate. The Extracellular segment spans residues 60–70; that stretch reads STNNPYTMNLR. The chain crosses the membrane as a helical span at residues 71 to 91; it reads FIAADTLQKLIVLALLTLWSH. Topologically, residues 92–100 are cytoplasmic; the sequence is LSRRGSLEW. A helical transmembrane segment spans residues 101–121; it reads TITLFSLSTLPNTLVMGIPLL. (indol-3-yl)acetate contacts are provided by N112 and L114. The Extracellular portion of the chain corresponds to 122–131; that stretch reads KGMYGEFSGS. The chain crosses the membrane as a helical span at residues 132–152; that stretch reads LMVQIVVLQCIIWYTLMLFMF. Position 145 (Y145) interacts with (indol-3-yl)acetate. Residues 153–452 are Cytoplasmic-facing; the sequence is EYRGARILIT…LIRNPNTYSS (300 aa). Disordered stretches follow at residues 214–236 and 282–331; these read RSDV…SNLT and GATP…AKGE. Residues 224–236 show a composition bias toward polar residues; the sequence is GFSSTTPRPSNLT. Residues 309 to 318 show a composition bias toward pro residues; that stretch reads APNPAMAAPP. A helical transmembrane segment spans residues 453–473; that stretch reads LIGLIWSLVCFRWNFEMPAII. Residues 474–476 lie on the Extracellular side of the membrane; the sequence is LKS. Residues 477–497 traverse the membrane as a helical segment; sequence ISILSDAGLGMAMFSLGLFMA. The Cytoplasmic segment spans residues 498-511; the sequence is LQPRIIACGNKVAT. Residues 512-532 traverse the membrane as a helical segment; sequence FAMAVRFLTGPAVMAAASIAV. Residues 533-537 are Extracellular-facing; the sequence is GLRGT. Residues 538-558 form a helical membrane-spanning segment; that stretch reads LLHVAIVQAALPQGIVPFVFA. Residues I552 and V553 each coordinate (indol-3-yl)acetate. The Cytoplasmic portion of the chain corresponds to 559 to 571; it reads KEYSVHPDILSTA. The helical transmembrane segment at 572–592 threads the bilayer; that stretch reads VIFGMLIALPITLVYYILLGL.

The protein belongs to the auxin efflux carrier (TC 2.A.69.1) family. In terms of assembly, homodimer. As to expression, expressed at low levels in roots and leaves. Expressed in roots, stem bases, stems, leaves and young panicles.

Its subcellular location is the membrane. Its function is as follows. May act as a component of the auxin efflux carrier. The protein is Probable auxin efflux carrier component 1c of Oryza sativa subsp. japonica (Rice).